A 353-amino-acid polypeptide reads, in one-letter code: Phosphate acyltransferase (353 aa).

The protein belongs to the PlsX family. Homodimer. Probably interacts with PlsY.

It localises to the cytoplasm. It catalyses the reaction a fatty acyl-[ACP] + phosphate = an acyl phosphate + holo-[ACP]. The protein operates within lipid metabolism; phospholipid metabolism. In terms of biological role, catalyzes the reversible formation of acyl-phosphate (acyl-PO(4)) from acyl-[acyl-carrier-protein] (acyl-ACP). This enzyme utilizes acyl-ACP as fatty acyl donor, but not acyl-CoA. This is Phosphate acyltransferase from Agrobacterium fabrum (strain C58 / ATCC 33970) (Agrobacterium tumefaciens (strain C58)).